The following is a 136-amino-acid chain: MKLVFSHVYDKSGNYIFPYCSPEESTIDYDSEEYVSRYITFHPNDVLEELYDESITNRFIGVDEIEALIDYENVKIGHWLYEEGCELEDYDPEETTYVVISRKELIYLLEKWDEFLAKPIIDPHYQEIIDTKEAYL.

It belongs to the UPF0275 family.

The polypeptide is UPF0275 protein PM0493 (Pasteurella multocida (strain Pm70)).